The chain runs to 704 residues: Elongation factor G (704 aa).

The region spanning 8 to 290 (ARYRNIGISA…AVIDYLPSPV (283 aa)) is the tr-type G domain. Residues 17–24 (AHIDAGKT), 88–92 (DTPGH), and 142–145 (NKMD) each bind GTP. N6-acetyllysine occurs at positions 504 and 643.

It belongs to the TRAFAC class translation factor GTPase superfamily. Classic translation factor GTPase family. EF-G/EF-2 subfamily.

The protein resides in the cytoplasm. In terms of biological role, catalyzes the GTP-dependent ribosomal translocation step during translation elongation. During this step, the ribosome changes from the pre-translocational (PRE) to the post-translocational (POST) state as the newly formed A-site-bound peptidyl-tRNA and P-site-bound deacylated tRNA move to the P and E sites, respectively. Catalyzes the coordinated movement of the two tRNA molecules, the mRNA and conformational changes in the ribosome. This chain is Elongation factor G, found in Escherichia coli O17:K52:H18 (strain UMN026 / ExPEC).